A 109-amino-acid polypeptide reads, in one-letter code: Short-chain dehydrogenase/reductase homolog YusS (109 aa).

The protein belongs to the short-chain dehydrogenases/reductases (SDR) family.

This chain is Short-chain dehydrogenase/reductase homolog YusS (yusS), found in Bacillus subtilis (strain 168).